A 351-amino-acid chain; its full sequence is Calcium release-activated calcium channel protein 1 (351 aa).

Over residues 1 to 21 (MSVWTTANNSGLETPTKSPIT) the composition is skewed to polar residues. Disordered stretches follow at residues 1-39 (MSVW…TGNH) and 71-141 (HAHP…EDLH). Residues 1-163 (MSVWTTANNS…SRAKLKASSK (163 aa)) are Cytoplasmic-facing. 2 stretches are compositionally biased toward low complexity: residues 22 to 33 (SSVPRAARSSAV) and 80 to 93 (SNSP…SNNS). Residues 94–106 (AGFQRTSISNSLL) show a composition bias toward polar residues. The chain crosses the membrane as a helical span at residues 164-181 (TSALLSGFAMVAMVEVQL). Over 182-191 (DHDTNVPPGM) the chain is Extracellular. Residues 192–212 (LIAFAICTTLLVAVHMLALMI) form a helical membrane-spanning segment. The Cytoplasmic segment spans residues 213–248 (STCILPNIETVCNLHSISLVHESPHERLHWYIETAW). Residues 249-269 (AFSTLLGLILFLLEIAILCWV) form a helical membrane-spanning segment. Residues 270–277 (KFYDLSPP) lie on the Extracellular side of the membrane. The helical transmembrane segment at 278 to 298 (AAWSACVVLIPVMIIFMAFAI) threads the bilayer. The Cytoplasmic segment spans residues 299 to 351 (HFYRSLVSHKYEVTVSGIRELEMLKEQMEQDHLEHHNNIRNNGMNYGASGDIV).

Belongs to the Orai family. In terms of assembly, hexamer.

The protein localises to the cell membrane. It catalyses the reaction Ca(2+)(in) = Ca(2+)(out). Functionally, pore-forming subunit of inward rectifying Ca(2+) release-activated Ca(2+) (CRAC) channels. Assembles in hexameric CRAC channels that mediate Ca(2+) influx upon depletion of endoplasmic reticulum Ca(2+) store and channel activation by Ca(2+) sensor Stim, a process known as store-operated Ca(2+) entry (SOCE). Regulates transcription factor NFAT nuclear import. In Drosophila melanogaster (Fruit fly), this protein is Calcium release-activated calcium channel protein 1.